The chain runs to 347 residues: Protein NDL3 (347 aa).

It belongs to the NDRG family. In terms of assembly, interacts with the heterodimers formed by GB1 and GG1, or GB1 and GG2. Interacts with RGS1.

The protein localises to the cytoplasm. Involved in a signaling pathway that modulates root auxin transport and auxin gradients. Acts partially by positively regulating the auxin carrier PIN2 and AUX1. Acts, together with GB1 as positive regulator of meristem initiation and branching. GB1 and NDL3 positively regulate basipetal inflorescence auxin transport and modulate MAX2 expression in shoots, which regulates organ and lateral meristem formation by the establishment and maintenance of auxin gradients. The sequence is that of Protein NDL3 from Arabidopsis thaliana (Mouse-ear cress).